Reading from the N-terminus, the 237-residue chain is Ribosomal RNA small subunit methyltransferase G (237 aa).

S-adenosyl-L-methionine-binding positions include glycine 78, phenylalanine 83, 129 to 130, and arginine 148; that span reads AE. A disordered region spans residues 216-237; sequence SKKKETPNKYPRKAGTPNKKPL.

The protein belongs to the methyltransferase superfamily. RNA methyltransferase RsmG family.

It is found in the cytoplasm. Functionally, specifically methylates the N7 position of a guanine in 16S rRNA. In Streptococcus agalactiae serotype Ia (strain ATCC 27591 / A909 / CDC SS700), this protein is Ribosomal RNA small subunit methyltransferase G.